The following is a 764-amino-acid chain: Tyrosine-protein phosphatase corkscrew (764 aa).

Residues 1-95 (WFHGNLSGKE…GTVVHLRQPF (95 aa)) enclose the SH2 domain. Positions 117-522 (FWEEFESLQQ…KFVYYAVQHY (406 aa)) constitute a Tyrosine-protein phosphatase domain. A PTPase insert (Cys/Ser-rich) region spans residues 174-325 (IRLPTDGDLY…LNGEGNQFKT (152 aa)). A disordered region spans residues 246–273 (SKHKRSESMSASANASAAGTGPGTPTAA). Low complexity predominate over residues 255–273 (SASANASAAGTGPGTPTAA). Substrate contacts are provided by residues D422, 460-466 (CSAGIGR), and Q507. Catalysis depends on C460, which acts as the Phosphocysteine intermediate. The disordered stretch occupies residues 599–666 (AAKLQPPLPP…NANGNGNILG (68 aa)). The segment covering 612–666 (SNNNNSSGNSGSYCNSSSSTSTAQHNGVVSSSNNCSSGSGSANSSNANGNGNILG) has biased composition (low complexity).

The protein belongs to the protein-tyrosine phosphatase family. Non-receptor class subfamily.

Its subcellular location is the cytoplasm. The catalysed reaction is O-phospho-L-tyrosyl-[protein] + H2O = L-tyrosyl-[protein] + phosphate. In terms of biological role, required in all receptor tyrosine kinase signaling pathways. Functions downstream of the receptor tyrosine kinase torso, acting in concert with D-Raf via tailless. Also functions downstream of Egfr (epidermal growth factor receptor) and btl (fibroblast growth factor receptor). The SH2 domain suggests that csw effects its role by mediating heteromeric protein interactions. Maternally required for normal determination of cell fates at the termini of the embryo. Required for cell fate specification of the ventral ectoderm, in the developing embryonic CNS and for embryonic tracheal cell migration. Functions during imaginal development for proper formation of adult structures such as eyes, aristae, L5 wing vein and the tarsal claw. The sequence is that of Tyrosine-protein phosphatase corkscrew (csw) from Drosophila virilis (Fruit fly).